A 380-amino-acid chain; its full sequence is Endo-chitosanase C (380 aa).

The signal sequence occupies residues 1 to 22 (MPIKSFASRLALSLAICGTAMG). One copy of the R3-1 repeat lies at 276–304 (CSWPGHCAGATCSSNDDCSDDLTCQNGKC). An R3-2 repeat occupies 311-341 (ETCSWEGHCKGATCSSNDDCSDELACISGIC). One copy of the R3-3 repeat lies at 348 to 378 (ETCEWEGHCEGASCSSHDDCDGNLACKNGKC).

This sequence belongs to the glycosyl hydrolase 75 family.

The protein resides in the secreted. It carries out the reaction Endohydrolysis of beta-(1-&gt;4)-linkages between D-glucosamine residues in a partly acetylated chitosan.. Chitosanase catalyzing the endo-type cleavage of chitosan, the deacylated form of chitin. Chitosanase may be crucial in the degradation of the deacetylated portion of chitin in the fungal cell wall. Chitoolisaccharides produced by the hydrolysis of partially N-acetylated chitosan are known to have many biological activities, including antibacterial activity, immune-enhancing effects, and elicitor activity. This chain is Endo-chitosanase C (csnC), found in Aspergillus oryzae (Yellow koji mold).